We begin with the raw amino-acid sequence, 417 residues long: Tyrosine--tRNA ligase (417 aa).

Residue Y34 coordinates L-tyrosine. The 'HIGH' region signature appears at 39 to 48; that stretch reads PSGDSLHIGH. L-tyrosine contacts are provided by Y165 and Q169. The 'KMSKS' region motif lies at 227–231; it reads KFGKT. K230 lines the ATP pocket. Positions 349–415 constitute an S4 RNA-binding domain; it reads ANIVDWLVDT…GKKNYTLAKV (67 aa).

The protein belongs to the class-I aminoacyl-tRNA synthetase family. TyrS type 1 subfamily. As to quaternary structure, homodimer.

The protein resides in the cytoplasm. The enzyme catalyses tRNA(Tyr) + L-tyrosine + ATP = L-tyrosyl-tRNA(Tyr) + AMP + diphosphate + H(+). Functionally, catalyzes the attachment of tyrosine to tRNA(Tyr) in a two-step reaction: tyrosine is first activated by ATP to form Tyr-AMP and then transferred to the acceptor end of tRNA(Tyr). This chain is Tyrosine--tRNA ligase, found in Limosilactobacillus fermentum (strain NBRC 3956 / LMG 18251) (Lactobacillus fermentum).